The primary structure comprises 200 residues: Recombination protein RecR (200 aa).

The segment at cysteine 59–cysteine 74 adopts a C4-type zinc-finger fold. The Toprim domain occupies serine 82–proline 177.

Belongs to the RecR family.

Functionally, may play a role in DNA repair. It seems to be involved in an RecBC-independent recombinational process of DNA repair. It may act with RecF and RecO. This chain is Recombination protein RecR, found in Bifidobacterium adolescentis (strain ATCC 15703 / DSM 20083 / NCTC 11814 / E194a).